A 472-amino-acid chain; its full sequence is Phosphoglucosamine mutase (472 aa).

The active-site Phosphoserine intermediate is Ser123. The Mg(2+) site is built by Ser123, Asp262, Asp264, and Asp266. Residue Ser123 is modified to Phosphoserine.

It belongs to the phosphohexose mutase family. Mg(2+) serves as cofactor. Activated by phosphorylation.

It catalyses the reaction alpha-D-glucosamine 1-phosphate = D-glucosamine 6-phosphate. Catalyzes the conversion of glucosamine-6-phosphate to glucosamine-1-phosphate. The sequence is that of Phosphoglucosamine mutase from Synechococcus elongatus (strain ATCC 33912 / PCC 7942 / FACHB-805) (Anacystis nidulans R2).